Here is a 639-residue protein sequence, read N- to C-terminus: Probable endo-1,3(4)-beta-glucanase ACLA_073210 (639 aa).

The N-terminal stretch at 1-21 (MAPSSLLLSVGSLIASSLASA) is a signal peptide. Residues 26–290 (IREQSQSYQL…WAGNVFGESG (265 aa)) form the GH16 domain. An N-linked (GlcNAc...) asparagine glycan is attached at N65. E146 (nucleophile) is an active-site residue. E151 functions as the Proton donor in the catalytic mechanism. Disordered stretches follow at residues 337 to 384 (TVAS…TVAE) and 442 to 545 (QSSS…GSSI). Over residues 339–348 (ASPNTASEVH) the composition is skewed to polar residues. 2 stretches are compositionally biased toward low complexity: residues 362–376 (PTVP…VPPA) and 478–488 (TTTEAVAETET). The GPI-anchor amidated alanine moiety is linked to residue A617. The propeptide at 618–639 (GARKLSVGLSGLVGALAVAALA) is removed in mature form.

Belongs to the glycosyl hydrolase 16 family.

It is found in the cell membrane. The catalysed reaction is Endohydrolysis of (1-&gt;3)- or (1-&gt;4)-linkages in beta-D-glucans when the glucose residue whose reducing group is involved in the linkage to be hydrolyzed is itself substituted at C-3.. Mixed-linked glucanase involved in the degradation of complex natural cellulosic substrates. The polypeptide is Probable endo-1,3(4)-beta-glucanase ACLA_073210 (Aspergillus clavatus (strain ATCC 1007 / CBS 513.65 / DSM 816 / NCTC 3887 / NRRL 1 / QM 1276 / 107)).